The sequence spans 148 residues: uncharacterized protein (148 aa).

In terms of domain architecture, N-acetyltransferase spans 1–144; the sequence is MNIKRITTEA…PHVLMTKEIS (144 aa).

This is an uncharacterized protein from Bacillus subtilis (strain 168).